We begin with the raw amino-acid sequence, 279 residues long: NAD kinase (279 aa).

The active-site Proton acceptor is D61. NAD(+) contacts are provided by residues 61–62, 138–139, K149, K166, D168, and 179–184; these read DG, ND, and TGYSFS.

It belongs to the NAD kinase family. It depends on a divalent metal cation as a cofactor.

The protein resides in the cytoplasm. It catalyses the reaction NAD(+) + ATP = ADP + NADP(+) + H(+). Its function is as follows. Involved in the regulation of the intracellular balance of NAD and NADP, and is a key enzyme in the biosynthesis of NADP. Catalyzes specifically the phosphorylation on 2'-hydroxyl of the adenosine moiety of NAD to yield NADP. The chain is NAD kinase from Borrelia garinii subsp. bavariensis (strain ATCC BAA-2496 / DSM 23469 / PBi) (Borreliella bavariensis).